Reading from the N-terminus, the 130-residue chain is Small ribosomal subunit protein uS8 (130 aa).

It belongs to the universal ribosomal protein uS8 family. Part of the 30S ribosomal subunit. Contacts proteins S5 and S12.

Its function is as follows. One of the primary rRNA binding proteins, it binds directly to 16S rRNA central domain where it helps coordinate assembly of the platform of the 30S subunit. The protein is Small ribosomal subunit protein uS8 of Pasteurella multocida (strain Pm70).